Reading from the N-terminus, the 466-residue chain is Magnetosome-associated protein MamJ (466 aa).

Disordered regions lie at residues 1-23 (MAKN…ISTG) and 60-80 (ANQG…RSQD). The segment at 1-24 (MAKNRRDRGTDLPGDGDQKISTGP) is not required to restore magnetic response to deletion mutant. Positions 25–80 (EIVSVTVHPSPNLAAAAKPVQGDIWASLLESSPWSANQGGLVETAQPPSAPIRSQD) are required to restore magnetic response to deletion mutant. 2 Tandem repeat unit repeats span residues 81 to 168 (PVPV…VEPE) and 169 to 256 (PAPV…VEPE). 4 not required to restore magnetic response to deletion mutant regions span residues 81-256 (PVPV…VEPE), 136-334 (ETDA…SQAE), 333-374 (AESV…AVEA), and 432-466 (VGSN…DKNK). Glu-Pro-rich motif repeat units lie at residues 145 to 164 (IEPE…EAAE), 233 to 252 (IEPE…EAAE), and 253 to 272 (VEPE…EAAE). Required to restore magnetic response to deletion mutant stretches follow at residues 375 to 432 (TRQP…GRLV) and 426 to 466 (VKGG…DKNK).

The protein belongs to the magnetosome MamJ protein family. Forms homooligomers. Interacts with MamK. Post-translationally, identified by N-terminal sequencing of a protein that is about 96 kDa in size. The protein runs anomalously on protein gels.

The protein localises to the magnetosome. Required for assembly of magnetosome chains. Regulates the dynamic behavior of MamK filaments. May connect magnetosomes to MamK filaments. Moves from the cell poles towards midcell; movement does not depend on the treadmilling ability of MamK, suggesting MamJ associates and disassociates continuously from the MamK filament. The sequence is that of Magnetosome-associated protein MamJ from Magnetospirillum gryphiswaldense (strain DSM 6361 / JCM 21280 / NBRC 15271 / MSR-1).